The primary structure comprises 377 residues: Guanine nucleotide-binding protein subunit beta-1 (377 aa).

WD repeat units follow at residues 63–93 (GHTGKVYSLDWTPEKNRIVSASQDGRLIVWN), 105–135 (LPCAWVMTCAFSPSGQSVACGGLDSVCSIFN), 154–185 (GHKGYVSSCQYVPDEDTHLITSSGDQTCVLWD), 202–233 (GHTADVQSVSISSSNPRLFVSGSCDTTARLWD), 246–276 (GHEGDVNTVKFFPDGNRFGTGSEDGTCRLFD), 293–323 (GDIPHVTSMAFSISGRLLFVGYSNGDCYVWD), and 339–369 (SHEGRISCLGLSADGSALCTGSWDTNLKIWA).

This sequence belongs to the WD repeat G protein beta family. In terms of assembly, g proteins are composed of 3 units, alpha, beta and gamma.

Functionally, guanine nucleotide-binding proteins (G proteins) are involved as a modulator or transducer in various transmembrane signaling systems. The beta and gamma chains are required for the GTPase activity, for replacement of GDP by GTP, and for G protein-effector interaction. The polypeptide is Guanine nucleotide-binding protein subunit beta-1 (Nicotiana tabacum (Common tobacco)).